The chain runs to 179 residues: Large ribosomal subunit protein uL6 (179 aa).

It belongs to the universal ribosomal protein uL6 family. In terms of assembly, part of the 50S ribosomal subunit.

In terms of biological role, this protein binds to the 23S rRNA, and is important in its secondary structure. It is located near the subunit interface in the base of the L7/L12 stalk, and near the tRNA binding site of the peptidyltransferase center. This chain is Large ribosomal subunit protein uL6, found in Geotalea uraniireducens (strain Rf4) (Geobacter uraniireducens).